A 644-amino-acid polypeptide reads, in one-letter code: Exoribonuclease 2 (644 aa).

The 328-residue stretch at 189–516 folds into the RNB domain; it reads RRDLTALDFV…NHRLLKAIIK (328 aa). Residues 561-643 form the S1 motif domain; sequence DTRFAAEILD…ETRSIIARPA (83 aa).

This sequence belongs to the RNR ribonuclease family. RNase II subfamily.

The protein localises to the cytoplasm. The enzyme catalyses Exonucleolytic cleavage in the 3'- to 5'-direction to yield nucleoside 5'-phosphates.. Involved in mRNA degradation. Hydrolyzes single-stranded polyribonucleotides processively in the 3' to 5' direction. The polypeptide is Exoribonuclease 2 (Klebsiella pneumoniae (strain 342)).